A 208-amino-acid chain; its full sequence is Imidazole glycerol phosphate synthase subunit HisH (208 aa).

In terms of domain architecture, Glutamine amidotransferase type-1 spans 1–206 (MFAIVDYDTG…KEMVSANDFS (206 aa)). C79 serves as the catalytic Nucleophile. Residues H181 and E183 contribute to the active site.

In terms of assembly, heterodimer of HisH and HisF.

It is found in the cytoplasm. It catalyses the reaction 5-[(5-phospho-1-deoxy-D-ribulos-1-ylimino)methylamino]-1-(5-phospho-beta-D-ribosyl)imidazole-4-carboxamide + L-glutamine = D-erythro-1-(imidazol-4-yl)glycerol 3-phosphate + 5-amino-1-(5-phospho-beta-D-ribosyl)imidazole-4-carboxamide + L-glutamate + H(+). It carries out the reaction L-glutamine + H2O = L-glutamate + NH4(+). It functions in the pathway amino-acid biosynthesis; L-histidine biosynthesis; L-histidine from 5-phospho-alpha-D-ribose 1-diphosphate: step 5/9. IGPS catalyzes the conversion of PRFAR and glutamine to IGP, AICAR and glutamate. The HisH subunit catalyzes the hydrolysis of glutamine to glutamate and ammonia as part of the synthesis of IGP and AICAR. The resulting ammonia molecule is channeled to the active site of HisF. The sequence is that of Imidazole glycerol phosphate synthase subunit HisH from Lactiplantibacillus plantarum (strain ATCC BAA-793 / NCIMB 8826 / WCFS1) (Lactobacillus plantarum).